The sequence spans 1807 residues: Triacetic acid lactone synthase cle1 (1807 aa).

A Starter acyltransferase (SAT) domain is found at 107-280; sequence LAPLTVIIHI…ANVPVNGRYH (174 aa). In terms of domain architecture, Ketosynthase family 3 (KS3) spans 385–795; that stretch reads DTSIAIIGAA…GNNTAIIICQ (411 aa). Residues cysteine 540, histidine 675, and histidine 718 each act as for beta-ketoacyl synthase activity in the active site. Residues 919–1176 enclose the Malonyl-CoA:ACP transacylase (MAT) domain; sequence SKAVYDSSYH…LGPCIWLEAG (258 aa). Positions 1272–1398 are N-terminal hotdog fold; it reads PVIDGLISLE…GTVIVDDERT (127 aa). A PKS/mFAS DH domain is found at 1272–1573; sequence PVIDGLISLE…FIRTSTSALQ (302 aa). The active-site Proton acceptor; for dehydratase activity is histidine 1304. The tract at residues 1416–1573 is C-terminal hotdog fold; that stretch reads TVFSAPRGVA…FIRTSTSALQ (158 aa). Aspartate 1475 acts as the Proton donor; for dehydratase activity in catalysis. Residues 1605 to 1679 enclose the Carrier 1 domain; that stretch reads ANVWSLTVNL…IICERITAQT (75 aa). Serine 1639 carries the O-(pantetheine 4'-phosphoryl)serine modification. Residues 1690-1720 form a disordered region; sequence GNSTSNTTSSSSQCTPSSSFESDSDTQATEL. Residues 1692–1710 show a composition bias toward low complexity; the sequence is STSNTTSSSSQCTPSSSFE. The 77-residue stretch at 1721–1797 folds into the Carrier 2 domain; the sequence is SLSAPTMEKV…DLHALVMRRG (77 aa). Serine 1757 is modified (O-(pantetheine 4'-phosphoryl)serine).

Pantetheine 4'-phosphate serves as cofactor.

It functions in the pathway secondary metabolite biosynthesis; terpenoid biosynthesis. Non-reducing polyketide synthase; part of the cluster A that mediates the biosynthesis of chevalone E and its oxidized derivatives that possess a unique five-membered lactone ring and can synergistically enhance the cytotoxicity of doxorubicin (DOX) in breast cancer cells. Within the pathway, cle1 takes part to the biosynthesis of the molecular scaffold via the synthesis the alpha-pyrone triacetic acid lactone (TAL) from one molecule of acetyl-CoA and two molecules of malonyl-CoA. The molecular scaffold is commonly biosynthesized by a series of enzymes including the non-reducing polyketide synthase (NR-PKS) cle1 that produces the alpha-pyrone triacetic acid lactone (TAL); The membrane-bound prenyltransferase cle5 that accepts TAL as its substrate to perform a C-3 geranylgeranylation reaction, in which the pathway-dedicated GGPS cle6 is required to provide GGPP, the other substrate of cle5; the FAD-dependent monooxygenase Cle3 that forms an (S)-epoxide ring at the terminal olefin of the geranylgeranyl group; and the terpene cyclase Cle7 that catalyzes the cyclization of the prenyl group that yields the pentacyclic pathway intermediate chevalone E. Chevalone E can derivatize into seven new oxidized analogs by the cytochrome P450 monooxygenases cle2 (acting at C-20) and cle4 (acting at C-11 and C-12). The protein is Triacetic acid lactone synthase cle1 of Aspergillus versicolor.